The sequence spans 721 residues: Polyribonucleotide nucleotidyltransferase (721 aa).

2 residues coordinate Mg(2+): Asp-495 and Asp-501. Residues 562–621 (PRLLSFRIDPELIGTVIGPGGRTIKGITERTNTKIDIEDGGIVTIASHDGAAAEEAQKII) enclose the KH domain. Residues 631–699 (GEIFPGVVTR…SRGRINLTLR (69 aa)) enclose the S1 motif domain. The disordered stretch occupies residues 702 to 721 (GQNGGMSYPEPTPTPVAPLS). The span at 711 to 721 (EPTPTPVAPLS) shows a compositional bias: pro residues.

This sequence belongs to the polyribonucleotide nucleotidyltransferase family. Requires Mg(2+) as cofactor.

It is found in the cytoplasm. The catalysed reaction is RNA(n+1) + phosphate = RNA(n) + a ribonucleoside 5'-diphosphate. Involved in mRNA degradation. Catalyzes the phosphorolysis of single-stranded polyribonucleotides processively in the 3'- to 5'-direction. The polypeptide is Polyribonucleotide nucleotidyltransferase (Prochlorococcus marinus (strain MIT 9301)).